The chain runs to 386 residues: 1-deoxy-D-xylulose 5-phosphate reductoisomerase (386 aa).

NADPH contacts are provided by Thr13, Gly14, Ser15, Ile16, Asn40, and Asn122. Lys123 lines the 1-deoxy-D-xylulose 5-phosphate pocket. NADPH is bound at residue Glu124. Residue Asp148 participates in Mn(2+) binding. Residues Ser149, Glu150, Ser177, and His201 each coordinate 1-deoxy-D-xylulose 5-phosphate. Residue Glu150 participates in Mn(2+) binding. Gly207 provides a ligand contact to NADPH. Residues Ser214, Asn219, Lys220, and Glu223 each contribute to the 1-deoxy-D-xylulose 5-phosphate site. Mn(2+) is bound at residue Glu223.

This sequence belongs to the DXR family. It depends on Mg(2+) as a cofactor. The cofactor is Mn(2+).

It catalyses the reaction 2-C-methyl-D-erythritol 4-phosphate + NADP(+) = 1-deoxy-D-xylulose 5-phosphate + NADPH + H(+). Its pathway is isoprenoid biosynthesis; isopentenyl diphosphate biosynthesis via DXP pathway; isopentenyl diphosphate from 1-deoxy-D-xylulose 5-phosphate: step 1/6. In terms of biological role, catalyzes the NADPH-dependent rearrangement and reduction of 1-deoxy-D-xylulose-5-phosphate (DXP) to 2-C-methyl-D-erythritol 4-phosphate (MEP). This chain is 1-deoxy-D-xylulose 5-phosphate reductoisomerase, found in Francisella tularensis subsp. holarctica (strain OSU18).